The following is a 513-amino-acid chain: Ferulic acid decarboxylase 1 (513 aa).

Positions 174, 197, and 240 each coordinate Mn(2+). Prenylated FMN is bound by residues 174–179, 196–197, and Glu240; these read NWSIAR and QH. Residue Glu289 is the Proton donor of the active site. Lys405 serves as a coordination point for prenylated FMN.

Belongs to the UbiD family. UbiD-like/FDC subfamily. As to quaternary structure, homodimer. May form higher order oligomers. Requires Mn(2+) as cofactor. The cofactor is prenylated FMN.

It is found in the cytoplasm. The catalysed reaction is (E)-4-coumarate + H(+) = 4-vinylphenol + CO2. It catalyses the reaction (E)-cinnamate + H(+) = styrene + CO2. The enzyme catalyses (E)-ferulate + H(+) = 2-methoxy-4-vinylphenol + CO2. Its function is as follows. Catalyzes the reversible decarboxylation of aromatic carboxylic acids like ferulic acid, p-coumaric acid or cinnamic acid, producing the corresponding vinyl derivatives 4-vinylphenol, 4-vinylguaiacol, and styrene, respectively, which play the role of aroma metabolites. In Candida dubliniensis (strain CD36 / ATCC MYA-646 / CBS 7987 / NCPF 3949 / NRRL Y-17841) (Yeast), this protein is Ferulic acid decarboxylase 1.